We begin with the raw amino-acid sequence, 160 residues long: MSVLKKPDLTDPKLRAKLAKGMGHNYYGEPAWPNDLLYIFPVVILGTLACVIGLSVLAPSPIGEKADPFATPLEILPEWYFFPTFNLLRVIPNKLLGVLSMAAVPVGLITVPFIESVNKFQNPFRRPVAMTVFVFSVVFAIWLGIGATMPINKALTLGLF.

Transmembrane regions (helical) follow at residues 36–56, 95–115, and 127–147; these read LLYIFPVVILGTLACVIGLSV, LLGVLSMAAVPVGLITVPFIE, and PVAMTVFVFSVVFAIWLGIGA.

Belongs to the cytochrome b family. PetD subfamily. In terms of assembly, the 4 large subunits of the cytochrome b6-f complex are cytochrome b6, subunit IV (17 kDa polypeptide, petD), cytochrome f and the Rieske protein, while the 4 small subunits are petG, petL, petM and petN. The complex functions as a dimer.

The protein localises to the plastid. Its subcellular location is the chloroplast thylakoid membrane. In terms of biological role, component of the cytochrome b6-f complex, which mediates electron transfer between photosystem II (PSII) and photosystem I (PSI), cyclic electron flow around PSI, and state transitions. The sequence is that of Cytochrome b6-f complex subunit 4 from Guillardia theta (Cryptophyte).